The following is a 341-amino-acid chain: Dye-decolorizing peroxidase (341 aa).

Asp-148 (proton acceptor) is an active-site residue. Position 221 (His-221) interacts with heme. Residues 304–341 (FLDDPPDAPTRLVPEATFTAPISDGSLGIGSLKRSAQQ) form a targeting peptide region.

Belongs to the DyP-type peroxidase family. Homohexamer. The cofactor is heme b.

It is found in the encapsulin nanocompartment. In terms of biological role, cargo protein of a type 1 encapsulin nanocompartment. Has both general peroxidase activity and dye-decolorizing activity. Can catalyze the oxidation of both protoporphyrinogen IX and coproporphyrinogen III to their corresponding porphyrins. Also efficiently decolorizes the dyes alizarin red and Cibacron blue F3GA. This cargo-loaded encapsulin nanocompartment is probably involved in protection against oxidative damage. This Rhodococcus erythropolis (strain PR4 / NBRC 100887) protein is Dye-decolorizing peroxidase.